Consider the following 1178-residue polypeptide: DNA-directed RNA polymerase subunit beta (1178 aa).

The protein belongs to the RNA polymerase beta chain family. In terms of assembly, the RNAP catalytic core consists of 2 alpha, 1 beta, 1 beta' and 1 omega subunit. When a sigma factor is associated with the core the holoenzyme is formed, which can initiate transcription.

It carries out the reaction RNA(n) + a ribonucleoside 5'-triphosphate = RNA(n+1) + diphosphate. In terms of biological role, DNA-dependent RNA polymerase catalyzes the transcription of DNA into RNA using the four ribonucleoside triphosphates as substrates. In Treponema pallidum (strain Nichols), this protein is DNA-directed RNA polymerase subunit beta.